The chain runs to 190 residues: Imidazoleglycerol-phosphate dehydratase (190 aa).

This sequence belongs to the imidazoleglycerol-phosphate dehydratase family.

It localises to the cytoplasm. The catalysed reaction is D-erythro-1-(imidazol-4-yl)glycerol 3-phosphate = 3-(imidazol-4-yl)-2-oxopropyl phosphate + H2O. The protein operates within amino-acid biosynthesis; L-histidine biosynthesis; L-histidine from 5-phospho-alpha-D-ribose 1-diphosphate: step 6/9. The polypeptide is Imidazoleglycerol-phosphate dehydratase (Methanococcus maripaludis (strain DSM 14266 / JCM 13030 / NBRC 101832 / S2 / LL)).